A 329-amino-acid chain; its full sequence is Mas-related G-protein coupled receptor member X2 (329 aa).

Over 1–33 (MDPTTPAWGTESTTMNGNDQALPLLCGKETMIS) the chain is Extracellular. A helical transmembrane segment spans residues 34–54 (VFLILFIALVGLVGNAFVLWL). Residues 55-63 (LGFRMRRNA) lie on the Cytoplasmic side of the membrane. Residues 64 to 84 (FSVYVLSLAGADFLFLCFQMT) traverse the membrane as a helical segment. Residues 85-96 (SCLAYLINFFGS) lie on the Extracellular side of the membrane. A helical transmembrane segment spans residues 97-116 (ISINIPSFFTVMTCAYLAGL). The Cytoplasmic portion of the chain corresponds to 117–143 (SMLSAISTERCLSVLWPIWYRCRRPRH). Residues 144–164 (LSAVMCVLLWALSLLLSILEG) form a helical membrane-spanning segment. The Extracellular segment spans residues 165–183 (KFCGFLFSDDDPGWCQTFD). A helical membrane pass occupies residues 184-204 (FITAAWLMFLFVVLCGSSLAL). Over 205 to 227 (LVRILCGSRSLPLTRLYLTILLT) the chain is Cytoplasmic. Residues 228–248 (VLIFLLCGLPFGIQWFLILWI) traverse the membrane as a helical segment. Topologically, residues 249-263 (WKNSVVLFCHIHPIS) are extracellular. The chain crosses the membrane as a helical span at residues 264-284 (VVLSSFNSSANPIIYFFVGSF). Residues 285–329 (RKQWRLRQPILKLALQRALQDTAEVDHSEGCFSQGTLEMSRSSLV) are Cytoplasmic-facing.

Belongs to the G-protein coupled receptor 1 family. Mas subfamily.

It is found in the cell membrane. Mast cell-specific receptor for basic secretagogues, i.e. cationic amphiphilic drugs, as well as endo- or exogenous peptides, consisting of a basic head group and a hydrophobic core. Recognizes and binds small molecules containing a cyclized tetrahydroisoquinoline (THIQ), such as non-steroidal neuromuscular blocking drugs (NMBDs), including tubocurarine and atracurium. In response to these compounds, mediates pseudo-allergic reactions characterized by histamine release, inflammation and airway contraction. This is Mas-related G-protein coupled receptor member X2 (MRGPRX2) from Macaca mulatta (Rhesus macaque).